We begin with the raw amino-acid sequence, 546 residues long: Chaperonin GroEL (546 aa).

ATP-binding positions include 29–32, K50, 86–90, G415, and D495; these read TLGP and DGTTT.

It belongs to the chaperonin (HSP60) family. As to quaternary structure, forms a cylinder of 14 subunits composed of two heptameric rings stacked back-to-back. Interacts with the co-chaperonin GroES.

It is found in the cytoplasm. The enzyme catalyses ATP + H2O + a folded polypeptide = ADP + phosphate + an unfolded polypeptide.. Together with its co-chaperonin GroES, plays an essential role in assisting protein folding. The GroEL-GroES system forms a nano-cage that allows encapsulation of the non-native substrate proteins and provides a physical environment optimized to promote and accelerate protein folding. The protein is Chaperonin GroEL of Parabacteroides distasonis (strain ATCC 8503 / DSM 20701 / CIP 104284 / JCM 5825 / NCTC 11152).